Reading from the N-terminus, the 305-residue chain is ATP synthase gamma chain (305 aa).

This sequence belongs to the ATPase gamma chain family. In terms of assembly, F-type ATPases have 2 components, CF(1) - the catalytic core - and CF(0) - the membrane proton channel. CF(1) has five subunits: alpha(3), beta(3), gamma(1), delta(1), epsilon(1). CF(0) has three main subunits: a, b and c.

It localises to the cell membrane. Functionally, produces ATP from ADP in the presence of a proton gradient across the membrane. The gamma chain is believed to be important in regulating ATPase activity and the flow of protons through the CF(0) complex. The protein is ATP synthase gamma chain of Streptomyces griseus subsp. griseus (strain JCM 4626 / CBS 651.72 / NBRC 13350 / KCC S-0626 / ISP 5235).